An 898-amino-acid chain; its full sequence is Netrin receptor UNC5A (898 aa).

A signal peptide spans 1 to 25; it reads MAVRPGLWPALLGIVLTAWLRGSGA. Over 26–361 the chain is Extracellular; that stretch reads QQSATVANPV…TSSGPEDVAL (336 aa). The 98-residue stretch at 44 to 141 folds into the Ig-like domain; that stretch reads PHFLVEPEDV…SGTTKSQKAY (98 aa). 3 disulfides stabilise this stretch: C65–C126, C77–C124, and C170–C221. N-linked (GlcNAc...) asparagine glycans are attached at residues N107 and N218. The Ig-like C2-type domain maps to 155–234; sequence PLAKEVSLEQ…NIVARRRSAS (80 aa). 2 TSP type-1 domains span residues 242–296 and 298–350; these read NGGW…TLCP and DGSW…DLCL. W245, W248, and W251 each carry a C-linked (Man) tryptophan glycan. 3 cysteine pairs are disulfide-bonded: C254–C291, C258–C295, and C269–C281. C-linked (Man) tryptophan glycans are attached at residues W301 and W304. 3 cysteine pairs are disulfide-bonded: C310/C344, C314/C349, and C322/C334. N343 carries an N-linked (GlcNAc...) asparagine glycan. A helical transmembrane segment spans residues 362-382; it reads YIGLVAVAVCLILLLLVLVLI. Residues 383-898 lie on the Cytoplasmic side of the membrane; sequence YCRKKEGLDS…GLFTVSEAEC (516 aa). One can recognise a ZU5 domain in the interval 497-640; that stretch reads NMAYGTFNFL…LGRFALVGEA (144 aa). An interaction with DCC region spans residues 661–679; the sequence is SLEYNIRVYCLHDTHDALK. The region spanning 817–897 is the Death domain; it reads QKIITSLDPP…AGLFTVSEAE (81 aa).

It belongs to the unc-5 family. In terms of assembly, homodimer and homooligomer. Interacts with the cytoplasmic part of DCC. Interacts with MAGED1. Interacts with PRKCABP, possibly mediating some interaction with PKC. Interacts (via extracellular domain) with FLRT2 (via extracellular domain). Interacts (via extracellular domain) with FLRT3 (via extracellular domain). Phosphorylated on cytoplasmic tyrosine residues. Phosphorylated by PKC in vitro. In terms of processing, proteolytically cleaved by caspases during apoptosis. The cleavage does not take place when the receptor is associated with netrin ligand. Its cleavage by caspases is required to induce apoptosis. Post-translationally, the two extracellular TSRs of UNC5A contain WxxWxxWxxC motifs that can be C-mannosylated on all tryptophans. DPY19L1 preferentially mannosylates the first two tryptophans and DPY19L3 prefers the third. C-mannosylation by DPY19L1 is required for transport of UNC5A from the endoplasmic reticulum to the cell surface. As to expression, restricted to central nervous system.

The protein localises to the cell membrane. It localises to the membrane raft. The protein resides in the cell projection. It is found in the neuron projection. Receptor for netrin required for axon guidance. Functions in the netrin signaling pathway and promotes neurite outgrowth in response to NTN1. Mediates axon repulsion of neuronal growth cones in the developing nervous system in response to netrin. Axon repulsion in growth cones may be mediated by its association with DCC that may trigger signaling for repulsion. It also acts as a dependence receptor required for apoptosis induction when not associated with netrin ligand. The polypeptide is Netrin receptor UNC5A (Unc5a) (Mus musculus (Mouse)).